The sequence spans 125 residues: Small ribosomal subunit protein uS13 (125 aa).

The protein belongs to the universal ribosomal protein uS13 family. In terms of assembly, part of the 30S ribosomal subunit. Forms a loose heterodimer with protein S19. Forms two bridges to the 50S subunit in the 70S ribosome.

In terms of biological role, located at the top of the head of the 30S subunit, it contacts several helices of the 16S rRNA. In the 70S ribosome it contacts the 23S rRNA (bridge B1a) and protein L5 of the 50S subunit (bridge B1b), connecting the 2 subunits; these bridges are implicated in subunit movement. Contacts the tRNAs in the A and P-sites. This Rickettsia felis (strain ATCC VR-1525 / URRWXCal2) (Rickettsia azadi) protein is Small ribosomal subunit protein uS13.